Here is a 184-residue protein sequence, read N- to C-terminus: ADP-ribosylation factor-like protein 8b (184 aa).

The segment at residues 1–18 (MGLWDALLNWLRSLFFKQ) is an intramembrane region (note=Mediates targeting to membranes). GTP contacts are provided by residues 29–34 (NAGKTS), 48–51 (MIPT), 70–74 (DLGGQ), and 129–132 (NKID).

Belongs to the small GTPase superfamily. Arf family. As to quaternary structure, interacts with tubulin.

It is found in the late endosome membrane. It localises to the lysosome membrane. The protein localises to the cytoplasm. Its subcellular location is the cytoskeleton. The protein resides in the spindle. In terms of biological role, may play a role in lysosome motility. May play a role in chromosome segregation. (Microbial infection) Component of tomato mosaic virus (ToMV) RNA replication complexes. Required for tobamovirus multiplication, especially for efficient negative-strand RNA synthesis and viral RNA capping. The chain is ADP-ribosylation factor-like protein 8b from Arabidopsis thaliana (Mouse-ear cress).